Here is a 232-residue protein sequence, read N- to C-terminus: uncharacterized protein (232 aa).

The segment at Asp-119–Gly-145 is disordered. A compositionally biased stretch (basic and acidic residues) spans Arg-123–Ala-133.

This is an uncharacterized protein from Encephalitozoon cuniculi (strain GB-M1) (Microsporidian parasite).